Reading from the N-terminus, the 329-residue chain is uncharacterized protein (329 aa).

In terms of domain architecture, Nudix hydrolase spans 27 to 185 (PRRASVAVII…IQIDSSRALK (159 aa)). The next 3 helical transmembrane spans lie at 123-143 (VITSNWGQFPLLLLSSFVFIL), 227-247 (PFLRGITHSIFVDLFIFLSPS), and 303-323 (LTLLVGFLFRLFLVYLLFLII).

It is found in the membrane. This is an uncharacterized protein from Schizosaccharomyces pombe (strain 972 / ATCC 24843) (Fission yeast).